The sequence spans 229 residues: ATPase SWSAP1 (229 aa).

The interval 209–229 is disordered; sequence PWPTQAGDPSSGKGSSSGGQP.

In terms of assembly, interacts with ZSWIM7; they form a functional complex involved in homologous recombination repair and stabilize each other. Interacts with RAD51, RAD51B, RAD51C, RAD51D and XRCC3; involved in homologous recombination repair.

Its subcellular location is the nucleus. ATPase which is preferentially stimulated by single-stranded DNA and is involved in homologous recombination repair (HRR). Has a DNA-binding activity which is independent of its ATPase activity. The polypeptide is ATPase SWSAP1 (SWSAP1) (Homo sapiens (Human)).